We begin with the raw amino-acid sequence, 287 residues long: Elongation factor Ts (287 aa).

An involved in Mg(2+) ion dislocation from EF-Tu region spans residues threonine 80 to leucine 83.

It belongs to the EF-Ts family.

The protein localises to the cytoplasm. Associates with the EF-Tu.GDP complex and induces the exchange of GDP to GTP. It remains bound to the aminoacyl-tRNA.EF-Tu.GTP complex up to the GTP hydrolysis stage on the ribosome. The chain is Elongation factor Ts from Pseudomonas savastanoi pv. phaseolicola (strain 1448A / Race 6) (Pseudomonas syringae pv. phaseolicola (strain 1448A / Race 6)).